Consider the following 626-residue polypeptide: Phosphomethylpyrimidine synthase (626 aa).

The segment at 1–22 (MTKQEKAINLSESAQVDQQSVQ) is disordered. The span at 10–22 (LSESAQVDQQSVQ) shows a compositional bias: polar residues. Residues Asn-232, Met-261, Tyr-290, His-326, 346–348 (SRG), 387–390 (DGLR), and Glu-426 contribute to the substrate site. His-430 contacts Zn(2+). Substrate is bound at residue Tyr-453. His-494 contacts Zn(2+). Residues Cys-574, Cys-577, and Cys-582 each contribute to the [4Fe-4S] cluster site.

This sequence belongs to the ThiC family. Homodimer. [4Fe-4S] cluster serves as cofactor.

The catalysed reaction is 5-amino-1-(5-phospho-beta-D-ribosyl)imidazole + S-adenosyl-L-methionine = 4-amino-2-methyl-5-(phosphooxymethyl)pyrimidine + CO + 5'-deoxyadenosine + formate + L-methionine + 3 H(+). It functions in the pathway cofactor biosynthesis; thiamine diphosphate biosynthesis. Catalyzes the synthesis of the hydroxymethylpyrimidine phosphate (HMP-P) moiety of thiamine from aminoimidazole ribotide (AIR) in a radical S-adenosyl-L-methionine (SAM)-dependent reaction. The chain is Phosphomethylpyrimidine synthase from Pseudomonas putida (strain ATCC 47054 / DSM 6125 / CFBP 8728 / NCIMB 11950 / KT2440).